Here is a 168-residue protein sequence, read N- to C-terminus: Mitochondrial inner membrane protein Mpv17 (168 aa).

The next 4 membrane-spanning stretches (helical) occupy residues 12-29, 41-61, 82-101, and 144-166; these read INVA…QFFF, RTLR…RRWY, MLVD…SFLV, and LGYQ…SMIL.

The protein belongs to the peroxisomal membrane protein PXMP2/4 family. As to quaternary structure, part of a larger complex that may be a homohexamer.

It localises to the mitochondrion inner membrane. Non-selective channel that modulates the membrane potential under normal conditions and oxidative stress, and is involved in mitochondrial homeostasis. Can translocate uridine, but not orotate, across a lipid membrane. Involved in maintenance of mitochondrial ultrastructure. May be involved in mitochondrial DNA (mtDNA) maintenance but does not appear to be directly involved in mitochondrial deoxynucleoside triphosphate (dNTP) pool homeostasis. May be involved in the regulation of reactive oxygen species metabolism and the control of oxidative phosphorylation. This Drosophila melanogaster (Fruit fly) protein is Mitochondrial inner membrane protein Mpv17.